We begin with the raw amino-acid sequence, 68 residues long: Conotoxin PnMLKM-011 (68 aa).

An N-terminal signal peptide occupies residues 1-17 (MGVVLFIFLVLFPLATL). The propeptide occupies 18-51 (QLDPDQPVERYAENKQLLNPDERRGIILHALGQR). 3 disulfide bridges follow: C53/C65, C54/C63, and C59/C66. L67 carries the leucine amide modification.

It belongs to the conotoxin M superfamily. As to expression, expressed by the venom duct.

It is found in the secreted. The polypeptide is Conotoxin PnMLKM-011 (Conus pennaceus (Feathered cone)).